A 132-amino-acid polypeptide reads, in one-letter code: Small ribosomal subunit protein uS8c (132 aa).

The protein belongs to the universal ribosomal protein uS8 family. Part of the 30S ribosomal subunit.

It is found in the plastid. Its subcellular location is the chloroplast. In terms of biological role, one of the primary rRNA binding proteins, it binds directly to 16S rRNA central domain where it helps coordinate assembly of the platform of the 30S subunit. The sequence is that of Small ribosomal subunit protein uS8c (rps8) from Gracilaria tenuistipitata var. liui (Red alga).